We begin with the raw amino-acid sequence, 348 residues long: NADH-ubiquinone oxidoreductase chain 2 (348 aa).

Transmembrane regions (helical) follow at residues 1 to 21, 25 to 45, 60 to 80, 99 to 119, 124 to 144, 151 to 171, 178 to 197, 202 to 224, 239 to 259, 274 to 294, and 326 to 346; these read MNPY…TLTF, HWIL…PLMA, FLIQ…NAWI, MFAL…PEVL, LLTG…LIIQ, PLIL…SGLN, ILAY…IQYA, LIAL…VLSA, ILAA…PLTG, DLPA…FFYL, and LTIS…ILML.

Belongs to the complex I subunit 2 family. As to quaternary structure, core subunit of respiratory chain NADH dehydrogenase (Complex I) which is composed of 45 different subunits.

It is found in the mitochondrion inner membrane. The catalysed reaction is a ubiquinone + NADH + 5 H(+)(in) = a ubiquinol + NAD(+) + 4 H(+)(out). Its function is as follows. Core subunit of the mitochondrial membrane respiratory chain NADH dehydrogenase (Complex I) which catalyzes electron transfer from NADH through the respiratory chain, using ubiquinone as an electron acceptor. Essential for the catalytic activity and assembly of complex I. In Danio rerio (Zebrafish), this protein is NADH-ubiquinone oxidoreductase chain 2 (mt-nd2).